A 334-amino-acid polypeptide reads, in one-letter code: Holliday junction branch migration complex subunit RuvB (334 aa).

Positions methionine 1 to threonine 181 are large ATPase domain (RuvB-L). Leucine 19 and arginine 20 together coordinate ADP. Glutamate 26, phenylalanine 27, and isoleucine 28 together coordinate ATP. ADP-binding residues include phenylalanine 27, isoleucine 28, glycine 61, leucine 62, glycine 63, lysine 64, threonine 65, and threonine 66. Leucine 62 and glycine 63 together coordinate ATP. ATP-binding positions include glutamate 127–phenylalanine 129 and arginine 170. Tyrosine 180, proline 216, and arginine 217 together coordinate ADP. A small ATPAse domain (RuvB-S) region spans residues valine 182–glutamate 255. Proline 216 is a binding site for ATP. The segment at glycine 256–phenylalanine 334 is head domain (RuvB-H). 2 residues coordinate DNA: arginine 309 and arginine 314.

The protein belongs to the RuvB family. Homohexamer. Forms an RuvA(8)-RuvB(12)-Holliday junction (HJ) complex. HJ DNA is sandwiched between 2 RuvA tetramers; dsDNA enters through RuvA and exits via RuvB. An RuvB hexamer assembles on each DNA strand where it exits the tetramer. Each RuvB hexamer is contacted by two RuvA subunits (via domain III) on 2 adjacent RuvB subunits; this complex drives branch migration. In the full resolvosome a probable DNA-RuvA(4)-RuvB(12)-RuvC(2) complex forms which resolves the HJ.

The protein resides in the cytoplasm. The enzyme catalyses ATP + H2O = ADP + phosphate + H(+). In terms of biological role, the RuvA-RuvB-RuvC complex processes Holliday junction (HJ) DNA during genetic recombination and DNA repair, while the RuvA-RuvB complex plays an important role in the rescue of blocked DNA replication forks via replication fork reversal (RFR). RuvA specifically binds to HJ cruciform DNA, conferring on it an open structure. The RuvB hexamer acts as an ATP-dependent pump, pulling dsDNA into and through the RuvAB complex. RuvB forms 2 homohexamers on either side of HJ DNA bound by 1 or 2 RuvA tetramers; 4 subunits per hexamer contact DNA at a time. Coordinated motions by a converter formed by DNA-disengaged RuvB subunits stimulates ATP hydrolysis and nucleotide exchange. Immobilization of the converter enables RuvB to convert the ATP-contained energy into a lever motion, pulling 2 nucleotides of DNA out of the RuvA tetramer per ATP hydrolyzed, thus driving DNA branch migration. The RuvB motors rotate together with the DNA substrate, which together with the progressing nucleotide cycle form the mechanistic basis for DNA recombination by continuous HJ branch migration. Branch migration allows RuvC to scan DNA until it finds its consensus sequence, where it cleaves and resolves cruciform DNA. Promotes Holliday junction (HJ) branch migration in conjunction with RuvA. Subunits can be free, ADP- or ATP-bound; nucleotide binding changes during the reaction cycle. Has a DNA-dependent ATPase activity; dsDNA and supercoiled DNA but not ssDNA stimulate activity. The polypeptide is Holliday junction branch migration complex subunit RuvB (Thermotoga maritima (strain ATCC 43589 / DSM 3109 / JCM 10099 / NBRC 100826 / MSB8)).